Reading from the N-terminus, the 353-residue chain is Photosystem II protein D1 (353 aa).

Thr2 bears the N-acetylthreonine mark. Residue Thr2 is modified to Phosphothreonine. 3 helical membrane-spanning segments follow: residues 29-46 (YIGWFGVLMIPTLLTATS), 118-133 (HFLLGVACYMGREWEL), and 142-156 (WIAVAYSAPVAAATA). A chlorophyll a-binding site is contributed by His118. Tyr126 is a pheophytin a binding site. Residues Asp170 and Glu189 each coordinate [CaMn4O5] cluster. The chain crosses the membrane as a helical span at residues 197–218 (FHMLGVAGVFGGSLFSAMHGSL). His198 is a chlorophyll a binding site. A quinone is bound by residues His215 and 264–265 (SF). His215 serves as a coordination point for Fe cation. Fe cation is bound at residue His272. The helical transmembrane segment at 274-288 (FLAAWPVVGIWFTAL) threads the bilayer. Positions 332, 333, 342, and 344 each coordinate [CaMn4O5] cluster. Positions 345–353 (AVEVPSTNG) are excised as a propeptide.

It belongs to the reaction center PufL/M/PsbA/D family. As to quaternary structure, PSII is composed of 1 copy each of membrane proteins PsbA, PsbB, PsbC, PsbD, PsbE, PsbF, PsbH, PsbI, PsbJ, PsbK, PsbL, PsbM, PsbT, PsbX, PsbY, PsbZ, Psb30/Ycf12, at least 3 peripheral proteins of the oxygen-evolving complex and a large number of cofactors. It forms dimeric complexes. The cofactor is The D1/D2 heterodimer binds P680, chlorophylls that are the primary electron donor of PSII, and subsequent electron acceptors. It shares a non-heme iron and each subunit binds pheophytin, quinone, additional chlorophylls, carotenoids and lipids. D1 provides most of the ligands for the Mn4-Ca-O5 cluster of the oxygen-evolving complex (OEC). There is also a Cl(-1) ion associated with D1 and D2, which is required for oxygen evolution. The PSII complex binds additional chlorophylls, carotenoids and specific lipids.. Tyr-161 forms a radical intermediate that is referred to as redox-active TyrZ, YZ or Y-Z. In terms of processing, C-terminally processed by CTPA; processing is essential to allow assembly of the oxygen-evolving complex and thus photosynthetic growth.

The protein localises to the plastid. It localises to the chloroplast thylakoid membrane. It carries out the reaction 2 a plastoquinone + 4 hnu + 2 H2O = 2 a plastoquinol + O2. Photosystem II (PSII) is a light-driven water:plastoquinone oxidoreductase that uses light energy to abstract electrons from H(2)O, generating O(2) and a proton gradient subsequently used for ATP formation. It consists of a core antenna complex that captures photons, and an electron transfer chain that converts photonic excitation into a charge separation. The D1/D2 (PsbA/PsbD) reaction center heterodimer binds P680, the primary electron donor of PSII as well as several subsequent electron acceptors. The sequence is that of Photosystem II protein D1 from Calycanthus floridus var. glaucus (Eastern sweetshrub).